The chain runs to 153 residues: MVALKGIPKVLSPELLFALARMGHGDEIVLADANFPTSSICQCGPVEIRADGLDIPQLLEAVLRLLPLDTYVESPAAVMDLVPSDKEKGLQTPIWKRYESLLLEADCKKTLMKLERFEFYERAKKAFAVVATGEMALYGNIILKKGTLDLGPS.

The active-site Proton donor is the His-24. A substrate-binding site is contributed by Asp-32. The active site involves Asp-69. The substrate site is built by Met-79, Tyr-120, Tyr-138, and Asn-140. Residue Tyr-120 is part of the active site.

It belongs to the RbsD / FucU family. In terms of assembly, mainly homodimer, but also exists as homotetramer, homooctamer, and homodecamer. The homodimeric form seems catalytically inactive. As to expression, widely expressed in various tissues and cell lines, including kidney, liver, and pancreas, marginally in muscle and testis.

The catalysed reaction is alpha-L-fucose = beta-L-fucose. The protein operates within carbohydrate metabolism; L-fucose metabolism. In terms of biological role, involved in the interconversion between alpha- and beta-L-fucoses. L-Fucose (6-deoxy-L-galactose) exists as alpha-L-fucose (29.5%) and beta-L-fucose (70.5%), the beta-form is metabolized through the salvage pathway. GDP-L-fucose formed either by the de novo or salvage pathways is transported into the endoplasmic reticulum, where it serves as a substrate for N- and O-glycosylations by fucosyltransferases. Fucosylated structures expressed on cell surfaces or secreted in biological fluids are believed to play a critical role in cell-cell adhesion and recognition processes. This is Fucose mutarotase (Fuom) from Mus musculus (Mouse).